A 154-amino-acid chain; its full sequence is Anaerobic ribonucleoside-triphosphate reductase-activating protein (154 aa).

Positions 26, 30, and 33 each coordinate [4Fe-4S] cluster. S-adenosyl-L-methionine contacts are provided by residues 32 to 34 (GCY) and Gly74.

The protein belongs to the organic radical-activating enzymes family. In terms of assembly, forms a tetramer composed of two NrdD and two NrdG subunits. Requires [4Fe-4S] cluster as cofactor.

It is found in the cytoplasm. It catalyses the reaction glycyl-[protein] + reduced [flavodoxin] + S-adenosyl-L-methionine = glycin-2-yl radical-[protein] + semiquinone [flavodoxin] + 5'-deoxyadenosine + L-methionine + H(+). Its function is as follows. Activation of anaerobic ribonucleoside-triphosphate reductase under anaerobic conditions by generation of an organic free radical, using S-adenosylmethionine and reduced flavodoxin as cosubstrates to produce 5'-deoxy-adenosine. This is Anaerobic ribonucleoside-triphosphate reductase-activating protein (nrdG) from Salmonella typhi.